The sequence spans 519 residues: Ribonuclease Y (519 aa).

A helical membrane pass occupies residues 3-23 (PLAILISILLSLFCLVVGYYV). Residues 209–272 (TVSVVNLPND…ETARIALDKL (64 aa)) form the KH domain. The region spanning 335–428 (VLKHSMEVAF…VAAADALSAA (94 aa)) is the HD domain.

It belongs to the RNase Y family.

The protein resides in the cell membrane. Functionally, endoribonuclease that initiates mRNA decay. This Bacillus licheniformis (strain ATCC 14580 / DSM 13 / JCM 2505 / CCUG 7422 / NBRC 12200 / NCIMB 9375 / NCTC 10341 / NRRL NRS-1264 / Gibson 46) protein is Ribonuclease Y.